Consider the following 293-residue polypeptide: 4-hydroxy-tetrahydrodipicolinate synthase (293 aa).

Thr-45 is a pyruvate binding site. Tyr-133 functions as the Proton donor/acceptor in the catalytic mechanism. Lys-161 serves as the catalytic Schiff-base intermediate with substrate. Pyruvate is bound at residue Ile-203.

It belongs to the DapA family. As to quaternary structure, homotetramer; dimer of dimers.

The protein localises to the cytoplasm. The catalysed reaction is L-aspartate 4-semialdehyde + pyruvate = (2S,4S)-4-hydroxy-2,3,4,5-tetrahydrodipicolinate + H2O + H(+). Its pathway is amino-acid biosynthesis; L-lysine biosynthesis via DAP pathway; (S)-tetrahydrodipicolinate from L-aspartate: step 3/4. Its function is as follows. Catalyzes the condensation of (S)-aspartate-beta-semialdehyde [(S)-ASA] and pyruvate to 4-hydroxy-tetrahydrodipicolinate (HTPA). In Exiguobacterium sibiricum (strain DSM 17290 / CCUG 55495 / CIP 109462 / JCM 13490 / 255-15), this protein is 4-hydroxy-tetrahydrodipicolinate synthase.